Reading from the N-terminus, the 515-residue chain is Galactose/methyl galactoside import ATP-binding protein MglA (515 aa).

ABC transporter domains follow at residues 8–243 (LEMR…VGRE) and 254–499 (IPKE…AKYL). 40–47 (GENGAGKS) is an ATP binding site.

The protein belongs to the ABC transporter superfamily. Galactose/methyl galactoside importer (TC 3.A.1.2.3) family. In terms of assembly, the complex is composed of one ATP-binding protein (MglA), two transmembrane proteins (MglC) and a solute-binding protein (MglB).

It localises to the cell membrane. It catalyses the reaction D-galactose(out) + ATP + H2O = D-galactose(in) + ADP + phosphate + H(+). It carries out the reaction methyl beta-D-galactoside(out) + ATP + H2O = methyl beta-D-galactoside(in) + ADP + phosphate + H(+). Functionally, part of the ABC transporter complex MglABC involved in galactose/methyl galactoside import. Responsible for energy coupling to the transport system. The protein is Galactose/methyl galactoside import ATP-binding protein MglA of Clostridium perfringens (strain 13 / Type A).